The following is a 555-amino-acid chain: Phosphoglucomutase (555 aa).

Positions 22 and 114 each coordinate alpha-D-glucose 1,6-bisphosphate. The active-site Phosphoserine intermediate is the S114. Mg(2+) contacts are provided by S114, D279, D281, and D283. Phosphoserine is present on S114. Positions 283, 284, 347, 366, 368, and 379 each coordinate alpha-D-glucose 1,6-bisphosphate.

This sequence belongs to the phosphohexose mutase family. Monomer. The cofactor is Mg(2+).

The protein localises to the cytoplasm. The enzyme catalyses alpha-D-glucose 1-phosphate = alpha-D-glucose 6-phosphate. The catalysed reaction is O-phospho-L-seryl-[protein] + alpha-D-glucose 1-phosphate = alpha-D-glucose 1,6-bisphosphate + L-seryl-[protein]. It catalyses the reaction alpha-D-glucose 1,6-bisphosphate + L-seryl-[protein] = O-phospho-L-seryl-[protein] + alpha-D-glucose 6-phosphate. Its function is as follows. Catalyzes the reversible isomerization of alpha-D-glucose 1-phosphate to alpha-D-glucose 6-phosphate. The mechanism proceeds via the intermediate compound alpha-D-glucose 1,6-bisphosphate. Key enzyme in hexose metabolism. The reverse reaction is an essential step for biosynthesis because glucose 1-phosphate is the starting point for the synthesis of UDP-glucose, which acts as a precursor for the synthesis of oligosaccharides and trehalose. The polypeptide is Phosphoglucomutase (pgmA) (Aspergillus oryzae (strain ATCC 42149 / RIB 40) (Yellow koji mold)).